The chain runs to 179 residues: Peptidyl-tRNA hydrolase (179 aa).

A tRNA-binding site is contributed by tyrosine 14. The Proton acceptor role is filled by histidine 19. TRNA contacts are provided by tyrosine 61, asparagine 63, and asparagine 107.

It belongs to the PTH family. Monomer.

It is found in the cytoplasm. The enzyme catalyses an N-acyl-L-alpha-aminoacyl-tRNA + H2O = an N-acyl-L-amino acid + a tRNA + H(+). Functionally, hydrolyzes ribosome-free peptidyl-tRNAs (with 1 or more amino acids incorporated), which drop off the ribosome during protein synthesis, or as a result of ribosome stalling. Its function is as follows. Catalyzes the release of premature peptidyl moieties from peptidyl-tRNA molecules trapped in stalled 50S ribosomal subunits, and thus maintains levels of free tRNAs and 50S ribosomes. The polypeptide is Peptidyl-tRNA hydrolase (Campylobacter lari (strain RM2100 / D67 / ATCC BAA-1060)).